Reading from the N-terminus, the 156-residue chain is Succinate dehydrogenase assembly factor 2-B, mitochondrial (156 aa).

Residues 1–24 (MLRQFIISTVGRRQPLLMILQSRL) constitute a mitochondrion transit peptide.

This sequence belongs to the SDHAF2 family. Interacts with the flavoprotein subunit within the SDH catalytic dimer.

It is found in the mitochondrion matrix. Plays an essential role in the assembly of succinate dehydrogenase (SDH), an enzyme complex (also referred to as respiratory complex II) that is a component of both the tricarboxylic acid (TCA) cycle and the mitochondrial electron transport chain, and which couples the oxidation of succinate to fumarate with the reduction of ubiquinone (coenzyme Q) to ubiquinol. Required for flavinylation (covalent attachment of FAD) of the flavoprotein subunit of the SDH catalytic dimer. This Drosophila yakuba (Fruit fly) protein is Succinate dehydrogenase assembly factor 2-B, mitochondrial.